The chain runs to 170 residues: ATP synthase subunit b (170 aa).

Residues 22–41 form a helical membrane-spanning segment; it reads ILNWAVVVFGLYKFLPGFLG. Residues 72 to 98 are disordered; the sequence is AKKDLSSAEEKASQIKADSLKRSESIR.

The protein belongs to the ATPase B chain family. In terms of assembly, F-type ATPases have 2 components, F(1) - the catalytic core - and F(0) - the membrane proton channel. F(1) has five subunits: alpha(3), beta(3), gamma(1), delta(1), epsilon(1). F(0) has four main subunits: a(1), b(1), b'(1) and c(10-14). The alpha and beta chains form an alternating ring which encloses part of the gamma chain. F(1) is attached to F(0) by a central stalk formed by the gamma and epsilon chains, while a peripheral stalk is formed by the delta, b and b' chains.

The protein resides in the cellular thylakoid membrane. Functionally, f(1)F(0) ATP synthase produces ATP from ADP in the presence of a proton or sodium gradient. F-type ATPases consist of two structural domains, F(1) containing the extramembraneous catalytic core and F(0) containing the membrane proton channel, linked together by a central stalk and a peripheral stalk. During catalysis, ATP synthesis in the catalytic domain of F(1) is coupled via a rotary mechanism of the central stalk subunits to proton translocation. Its function is as follows. Component of the F(0) channel, it forms part of the peripheral stalk, linking F(1) to F(0). This is ATP synthase subunit b from Prochlorococcus marinus (strain MIT 9301).